Consider the following 216-residue polypeptide: Adenylate kinase (216 aa).

10–15 (GAGKGT) is an ATP binding site. The interval 30 to 59 (STGDMLREAVKADTPLGIEAKKVMDVGGLI) is NMP. AMP contacts are provided by residues T31, R36, 57–59 (GLI), 85–88 (GFPR), and Q92. The segment at 122–159 (GRRAHLTSGRTYHIVYNPPKVEGIDDITGEELIQRTDD) is LID. ATP contacts are provided by residues R123 and 132 to 133 (TY). AMP-binding residues include R156 and R167. G202 provides a ligand contact to ATP.

The protein belongs to the adenylate kinase family. In terms of assembly, monomer.

It localises to the cytoplasm. It carries out the reaction AMP + ATP = 2 ADP. It functions in the pathway purine metabolism; AMP biosynthesis via salvage pathway; AMP from ADP: step 1/1. In terms of biological role, catalyzes the reversible transfer of the terminal phosphate group between ATP and AMP. Plays an important role in cellular energy homeostasis and in adenine nucleotide metabolism. The protein is Adenylate kinase of Ruthia magnifica subsp. Calyptogena magnifica.